We begin with the raw amino-acid sequence, 151 residues long: UPF0178 protein mma_0312 (151 aa).

This sequence belongs to the UPF0178 family.

In Janthinobacterium sp. (strain Marseille) (Minibacterium massiliensis), this protein is UPF0178 protein mma_0312.